We begin with the raw amino-acid sequence, 377 residues long: Glutamate 5-kinase (377 aa).

Lys20 contributes to the ATP binding site. Substrate is bound by residues Ser60, Asp147, and Asn159. Residue 179 to 180 (TD) coordinates ATP. The PUA domain occupies 285–363 (AGRLVIDDGA…DKVYQVLGEA (79 aa)).

Belongs to the glutamate 5-kinase family.

Its subcellular location is the cytoplasm. The enzyme catalyses L-glutamate + ATP = L-glutamyl 5-phosphate + ADP. The protein operates within amino-acid biosynthesis; L-proline biosynthesis; L-glutamate 5-semialdehyde from L-glutamate: step 1/2. Its function is as follows. Catalyzes the transfer of a phosphate group to glutamate to form L-glutamate 5-phosphate. The polypeptide is Glutamate 5-kinase (Acinetobacter baumannii (strain AB307-0294)).